Here is a 430-residue protein sequence, read N- to C-terminus: Tol-Pal system protein TolB (430 aa).

The N-terminal stretch at 1-21 (MKQAFRVALGFFLLWASVLHA) is a signal peptide.

This sequence belongs to the TolB family. The Tol-Pal system is composed of five core proteins: the inner membrane proteins TolA, TolQ and TolR, the periplasmic protein TolB and the outer membrane protein Pal. They form a network linking the inner and outer membranes and the peptidoglycan layer.

The protein localises to the periplasm. Its function is as follows. Part of the Tol-Pal system, which plays a role in outer membrane invagination during cell division and is important for maintaining outer membrane integrity. TolB occupies a key intermediary position in the Tol-Pal system because it communicates directly with both membrane-embedded components, Pal in the outer membrane and TolA in the inner membrane. This is Tol-Pal system protein TolB from Sodalis glossinidius (strain morsitans).